The chain runs to 353 residues: Sesquiterpene synthase Agr8 (353 aa).

Residues Asp82, Asn220, Ser224, and Glu228 each contribute to the Mg(2+) site. The DDXXD motif signature appears at 82–86 (DEYTD). Residues Arg309 and Tyr310 each coordinate (2E,6E)-farnesyl diphosphate.

It belongs to the terpene synthase family. Requires Mg(2+) as cofactor.

The enzyme catalyses (2E,6E)-farnesyl diphosphate = gamma-muurolene + diphosphate. The catalysed reaction is (2E,6E)-farnesyl diphosphate = alpha-selinene + diphosphate. It catalyses the reaction (2E,6E)-farnesyl diphosphate = delta-cadinene + diphosphate. Functionally, terpene cyclase that catalyzes the cyclization of farnesyl diphosphate (FPP) to various sesquiterpenes, including beta-elemene, gamma-muurolene, alpha-selinene, beta-selinene, beta-cadinene, delta-cadinene and alpha-cadinol. In Cyclocybe aegerita (Black poplar mushroom), this protein is Sesquiterpene synthase Agr8.